A 394-amino-acid polypeptide reads, in one-letter code: Elongation factor Tu (394 aa).

Residues 10 to 204 form the tr-type G domain; the sequence is KPHVNIGTIG…AVDSYIPQPV (195 aa). The G1 stretch occupies residues 19 to 26; sequence GHVDHGKT. A GTP-binding site is contributed by 19–26; that stretch reads GHVDHGKT. Thr26 is a Mg(2+) binding site. Residues 60–64 form a G2 region; sequence GITIS. Positions 81-84 are G3; that stretch reads DCPG. GTP is bound by residues 81 to 85 and 136 to 139; these read DCPGH and NKVD. Residues 136-139 are G4; the sequence is NKVD. The segment at 174 to 176 is G5; the sequence is SAL.

Belongs to the TRAFAC class translation factor GTPase superfamily. Classic translation factor GTPase family. EF-Tu/EF-1A subfamily. In terms of assembly, monomer.

It is found in the cytoplasm. It catalyses the reaction GTP + H2O = GDP + phosphate + H(+). Its function is as follows. GTP hydrolase that promotes the GTP-dependent binding of aminoacyl-tRNA to the A-site of ribosomes during protein biosynthesis. The polypeptide is Elongation factor Tu (Rickettsia massiliae (strain Mtu5)).